Here is a 57-residue protein sequence, read N- to C-terminus: Zinc finger protein MJ0458.1 (57 aa).

4 short sequence motifs (c(P)XCG motif) span residues 8 to 12 (CISCN), 26 to 30 (CPNCG), 37 to 41 (CERCR), and 49 to 53 (CPKCG). Zn(2+)-binding residues include C26 and C29. 2 residues coordinate Zn(2+): C49 and C52.

In terms of assembly, monomer in solution.

Functionally, zinc-binding protein that binds only one zinc ion. This is Zinc finger protein MJ0458.1 from Methanocaldococcus jannaschii (strain ATCC 43067 / DSM 2661 / JAL-1 / JCM 10045 / NBRC 100440) (Methanococcus jannaschii).